A 175-amino-acid chain; its full sequence is CDP-archaeol synthase (175 aa).

Helical transmembrane passes span 41–61 (GFFVGLIFGALAGLMQMQLLE), 82–102 (TILIFALAVGSLFGDMFMSFF), 122–142 (FVLGALIFAYLASPVWFAEQF), and 147–167 (IAVILIITPLLHLATNVVGYF).

Belongs to the CDP-archaeol synthase family. The cofactor is Mg(2+).

Its subcellular location is the cell membrane. The catalysed reaction is 2,3-bis-O-(geranylgeranyl)-sn-glycerol 1-phosphate + CTP + H(+) = CDP-2,3-bis-O-(geranylgeranyl)-sn-glycerol + diphosphate. The protein operates within membrane lipid metabolism; glycerophospholipid metabolism. Its function is as follows. Catalyzes the formation of CDP-2,3-bis-(O-geranylgeranyl)-sn-glycerol (CDP-archaeol) from 2,3-bis-(O-geranylgeranyl)-sn-glycerol 1-phosphate (DGGGP) and CTP. This reaction is the third ether-bond-formation step in the biosynthesis of archaeal membrane lipids. This is CDP-archaeol synthase from Methanococcoides burtonii (strain DSM 6242 / NBRC 107633 / OCM 468 / ACE-M).